We begin with the raw amino-acid sequence, 675 residues long: Methionine--tRNA ligase (675 aa).

The 'HIGH' region signature appears at Pro15–His25. The Zn(2+) site is built by Cys146, Cys149, Cys159, and Cys162. Residues Lys332–Ser336 carry the 'KMSKS' region motif. Lys335 is an ATP binding site. Positions Asp573–Lys675 constitute a tRNA-binding domain.

The protein belongs to the class-I aminoacyl-tRNA synthetase family. MetG type 1 subfamily. In terms of assembly, homodimer. The cofactor is Zn(2+).

It localises to the cytoplasm. It carries out the reaction tRNA(Met) + L-methionine + ATP = L-methionyl-tRNA(Met) + AMP + diphosphate. Is required not only for elongation of protein synthesis but also for the initiation of all mRNA translation through initiator tRNA(fMet) aminoacylation. The chain is Methionine--tRNA ligase from Yersinia pseudotuberculosis serotype O:1b (strain IP 31758).